Consider the following 863-residue polypeptide: uncharacterized protein (863 aa).

Residues 1-29 form the signal peptide; the sequence is MHQSGSVSLCRSAISVLVATALYSPIALA. Residues 595 to 863 form the Autotransporter domain; sequence GVSYDTAMWS…NTQAGVVWTF (269 aa).

The protein localises to the cell outer membrane. This is an uncharacterized protein from Escherichia coli (strain K12).